A 271-amino-acid chain; its full sequence is Very long chain fatty acid elongase 3 (271 aa).

Asparagine 6 is a glycosylation site (N-linked (GlcNAc...) asparagine). Transmembrane regions (helical) follow at residues 30 to 50, 67 to 87, 116 to 136, 141 to 161, 165 to 187, 199 to 219, and 236 to 256; these read FLEEYWVSSFLIVVVYLLLIV, PLILWSFFLAIFSILGTLRMW, FWSFLFLLSKVVELGDTAFII, PLIFVHWYHHSTVLLFTSFGY, VPSGGWFMTMNFGVHSVMYTYYT, LPMVITSLQILQMVLGTIFGI, and HFFWSFMLYGTYFILFAHFFH.

It belongs to the ELO family. ELOVL3 subfamily. In terms of assembly, interacts with TECR. Post-translationally, N-Glycosylated. As to expression, expressed in brown adipose tissue and liver. In the skin, strong expressed in the cells of the inner layer of the outer root sheath of the hair follicles and in the sebocytes of the sebaceous glands. Hardly detectable in the epidermis and not at all in fibroblasts.

The protein localises to the endoplasmic reticulum membrane. The enzyme catalyses a very-long-chain acyl-CoA + malonyl-CoA + H(+) = a very-long-chain 3-oxoacyl-CoA + CO2 + CoA. The catalysed reaction is eicosanoyl-CoA + malonyl-CoA + H(+) = 3-oxodocosanoyl-CoA + CO2 + CoA. It catalyses the reaction hexadecanoyl-CoA + malonyl-CoA + H(+) = 3-oxooctadecanoyl-CoA + CO2 + CoA. It carries out the reaction octadecanoyl-CoA + malonyl-CoA + H(+) = 3-oxoeicosanoyl-CoA + CO2 + CoA. The enzyme catalyses (9Z)-octadecenoyl-CoA + malonyl-CoA + H(+) = 3-oxo-(11Z)-eicosenoyl-CoA + CO2 + CoA. The catalysed reaction is (9Z,12Z)-octadecadienoyl-CoA + malonyl-CoA + H(+) = (11Z,14Z)-3-oxoicosa-11,14-dienoyl-CoA + CO2 + CoA. It catalyses the reaction (9Z,12Z,15Z)-octadecatrienoyl-CoA + malonyl-CoA + H(+) = (11Z,14Z,17Z)-3-oxoeicosatrienoyl-CoA + CO2 + CoA. It carries out the reaction docosanoyl-CoA + malonyl-CoA + H(+) = 3-oxotetracosanoyl-CoA + CO2 + CoA. The enzyme catalyses tetradecanoyl-CoA + malonyl-CoA + H(+) = 3-oxohexadecanoyl-CoA + CO2 + CoA. Its pathway is lipid metabolism; polyunsaturated fatty acid biosynthesis. Functionally, catalyzes the first and rate-limiting reaction of the four reactions that constitute the long-chain fatty acids elongation cycle. This endoplasmic reticulum-bound enzymatic process allows the addition of 2 carbons to the chain of long- and very long-chain fatty acids (VLCFAs) per cycle. Condensing enzyme that exhibits activity toward saturated and unsaturated acyl-CoA substrates with higher activity toward C18 acyl-CoAs, especially C18:0 acyl-CoAs. May participate in the production of saturated and monounsaturated VLCFAs of different chain lengths that are involved in multiple biological processes as precursors of membrane lipids and lipid mediators. Participates in the formation of certain VLCFA and triglycerides in certain cells of the hair follicles and the sebaceous glands, required for skin barrier function. Critical enzyme for lipid accumulation and metabolic activity in brown adipocytes during the early phase of the tissue recruitment. Plays a role in lipid storage and in resistance to diet-induced obesity. This is Very long chain fatty acid elongase 3 from Mus musculus (Mouse).